The following is a 509-amino-acid chain: Coiled-coil domain-containing protein 181 (509 aa).

Disordered regions lie at residues 27-122 and 287-368; these read INDK…EDEE and LAQV…NEKK. Basic and acidic residues-rich tracts occupy residues 41–58 and 67–82; these read ACKK…KETE and DPDK…RRND. Polar residues predominate over residues 319–333; the sequence is RIQSAGVSPVTSTYC. Coiled coils occupy residues 335-377 and 418-488; these read SPRQ…VFKA and LKKK…RSKQ. Residues 337 to 368 show a composition bias toward basic and acidic residues; that stretch reads RQKELQKQLERKRERLKREEEQRKLEEENEKK.

It belongs to the CCDC181 family. As to quaternary structure, homodimer. Interacts with HOOK1. Interacts with HOOK2. Interacts with HOOK3.

The protein resides in the cytoplasm. It localises to the cytoskeleton. The protein localises to the cell projection. It is found in the cilium. Its subcellular location is the flagellum. In terms of biological role, microtubule-binding protein that localizes to the microtubular manchette of elongating spermatids. This chain is Coiled-coil domain-containing protein 181, found in Rattus norvegicus (Rat).